The primary structure comprises 1203 residues: Regulator of telomere elongation helicase 1 (1203 aa).

A Helicase ATP-binding domain is found at 7–296 (NGVTVDFPFQ…ARVTQQGELQ (290 aa)). 42–49 (SPTGTGKT) is a binding site for ATP. Positions 145, 163, 172, and 207 each coordinate [4Fe-4S] cluster. Positions 151-167 (KKQESNHMQISLCRKKV) match the Nuclear localization signal motif. Positions 250-253 (DEAH) match the DEAH box motif. A Nuclear localization signal motif is present at residues 871 to 877 (QKGGRKK). Disordered regions lie at residues 998-1020 (QLDP…TSKG) and 1120-1203 (TTGK…RSKQ). The span at 1123-1134 (KDLELEGPRDES) shows a compositional bias: basic and acidic residues. Residues 1160–1167 (QSKISSFF) carry the PIP-box motif. The segment covering 1169–1181 (QRPDESVRSDDTT) has biased composition (basic and acidic residues).

It belongs to the helicase family. RAD3/XPD subfamily. In terms of assembly, interacts with TERF1. Interacts (via PIP-box) with PCNA; the interaction is direct and essential for suppressing telomere fragility. Interacts with MMS19; the interaction mediates the association of RTEL1 with the cytosolic iron-sulfur protein assembly (CIA) complex.

Its subcellular location is the nucleus. The catalysed reaction is ATP + H2O = ADP + phosphate + H(+). Functionally, a probable ATP-dependent DNA helicase implicated in telomere-length regulation, DNA repair and the maintenance of genomic stability. Acts as an anti-recombinase to counteract toxic recombination and limit crossover during meiosis. Regulates meiotic recombination and crossover homeostasis by physically dissociating strand invasion events and thereby promotes noncrossover repair by meiotic synthesis dependent strand annealing (SDSA) as well as disassembly of D loop recombination intermediates. Also disassembles T loops and prevents telomere fragility by counteracting telomeric G4-DNA structures, which together ensure the dynamics and stability of the telomere. The polypeptide is Regulator of telomere elongation helicase 1 (Rtel1) (Mus spretus (Western Mediterranean mouse)).